The chain runs to 266 residues: Basic endochitinase C (266 aa).

Positions 1 to 23 (MRSLAVVVAVVATVAMAIGTAHG) are cleaved as a signal peptide. Disulfide bonds link Cys46/Cys108, Cys120/Cys128, and Cys246/Cys259. Catalysis depends on Glu90, which acts as the Proton donor.

The protein belongs to the glycosyl hydrolase 19 family. Chitinase class II subfamily. As to expression, localized to the starchy endoderm of the seed May localize to other parts of the seed including the aleurone cells (at protein level).

It carries out the reaction Random endo-hydrolysis of N-acetyl-beta-D-glucosaminide (1-&gt;4)-beta-linkages in chitin and chitodextrins.. Functionally, defense against chitin-containing fungal pathogens. Binds the hyphal tips of fungi and degrades nascent chitin. This Secale cereale (Rye) protein is Basic endochitinase C.